The following is a 2081-amino-acid chain: Non-reducing polyketide synthase terA (2081 aa).

Positions 85–190 are N-terminal acylcarrier protein transacylase (SAT) domain (SAT); the sequence is TLTLAFRIGV…ISLDIFAPFH (106 aa). The Ketosynthase family 3 (KS3) domain maps to 316–749; that stretch reads AQKIAIVGMA…GGNTGLLLED (434 aa). Active-site for beta-ketoacyl synthase activity residues include Cys488, His623, and His667. Positions 849–1147 are malonyl-CoA:ACP transacylase (MAT) domain; the sequence is LFTGQGSHYT…LTLPSLRKQE (299 aa). The segment at 1230-1364 is N-terminal hotdog fold; the sequence is QKVIKEDFGQ…CHVEYGDIKT (135 aa). Positions 1230–1539 constitute a PKS/mFAS DH domain; that stretch reads QKVIKEDFGQ…FKAIPRAVIN (310 aa). Residues 1259–1536 are product template (PT) domain; the sequence is VTGHLVNGSA…GVKFKAIPRA (278 aa). The active-site Proton acceptor; for dehydratase activity is His1262. The segment at 1392–1539 is C-terminal hotdog fold; sequence YQKLDRKAAY…FKAIPRAVIN (148 aa). Asp1452 acts as the Proton donor; for dehydratase activity in catalysis. The tract at residues 1549–1578 is disordered; the sequence is KALEKSAPRQNPKATATKTTQKPQAPVPVP. Residues 1558 to 1572 are compositionally biased toward low complexity; sequence QNPKATATKTTQKPQ. The Carrier 1 domain occupies 1580–1658; that stretch reads KQNKAIIDDF…QVKELILKLA (79 aa). Ser1617 is modified (O-(pantetheine 4'-phosphoryl)serine). Residues 1659-1700 form a disordered region; the sequence is GSSSDENTTDTPDEEEDPATADADNTEMIRENPLESVSPNVS. Acidic residues predominate over residues 1665–1677; sequence NTTDTPDEEEDPA. One can recognise a Carrier 2 domain in the interval 1699–1776; sequence VSSSEAMDGF…QARLAIASLM (78 aa). Ser1736 carries the post-translational modification O-(pantetheine 4'-phosphoryl)serine. A disordered region spans residues 1783-1809; it reads GATTPYSGSDDAKSSTSSLTAGSVLTP. The tract at residues 1840-2070 is thioesterase (TE) domain; that stretch reads TLFLLPDGSG…TMMREPKVNQ (231 aa).

It carries out the reaction 3 malonyl-CoA + acetyl-CoA + 2 H(+) = orsellinate + 3 CO2 + 4 CoA. It functions in the pathway secondary metabolite biosynthesis. Functionally, non-reducing polyketide synthase; part of the gene cluster that mediates the biosynthesis of terrein, a fungal metabolite with ecological, antimicrobial, antiproliferative, and antioxidative activities. The first step in the pathway is performed by the polyketide synthase terA that produces 4-hydroxy-6-methylpyranon (4-HMP), orsellinic acid (OA), and 2,3-dehydro-6-hydroxymellein (2,3-dehydro-6-HM) by condensing acetyl-CoA with two, three, or four malonyl-CoA units, respectively. 4-HMP and OA are not pathway intermediates, but are rather shunt or side products. 2,3-dehydro-6-HM is further converted to 6-hydroxymellein (6-HM) by the 6-hydroxymellein synthase terB. The monooxygenases terC and terD, the multicopper oxidase terE and the Kelch-like protein terF are then involved in the transformation of 6-HM to terrein. Even if they are co-regulated with the other terrein cluster genes, terH and terI seem to be dispensable for terrein production; whereas one or both of the 2 transporters terG and terJ are probably required for efficient secretion of metabolites. The polypeptide is Non-reducing polyketide synthase terA (Aspergillus terreus (strain NIH 2624 / FGSC A1156)).